The primary structure comprises 253 residues: uncharacterized protein (253 aa).

This is an uncharacterized protein from Caenorhabditis elegans.